Here is a 633-residue protein sequence, read N- to C-terminus: MSASWADVADSENTGSGSSNQNSHPSRPAYVPPHLRNRPAASEPVAPLPANDRVGYGGPPSGSRWAPGGSGVGVGGGGGYRADAGRPGSGSGYGGRGGGGWNNRSGGWDRREREVNPFENDDSEPEPAFTEQDNTVINFDAYEDIPIETSGDNVPPPVNTFAEIDLGEALNLNIRRCKYVKPTPVQRHAIPILLEGRDLMACAQTGSGKTAAFCFPIISGIMKDQHVQRPRGSRTVYPLAVILSPTRELASQIHDEAKKFSYQTGVKVVVAYGGTPINQQLRELERGVDILVATPGRLNDLLERARVSMQMIRFLALDEADRMLDMGFEPQIRKIVEQMDMPPRGVRQTLLFSATFPREIQRLAADFLANYIFLAVGRVGSSTDLIVQRVEFVLDSDKRSHLMDLLHAQRENGIQGKQALTLVFVETKRGADSLENWLCINGFPATSIHGDRTQQEREVALKAFKSGRTPILVATDVAARGLDIPHVAHVVNFDLPNDIDDYVHRIGRTGRAGKSGLATAFFNDGNTSLARPLAELMQEANQEVPEWLTRYASRSSFGGGKNRRSGGRFGGRDFRREGSFGSGRGGYGGGGGGYGGGGGYGGGGGYGGGGGYGGGYGGASSGGYGGEPPSAWD.

A disordered region spans residues 1 to 110 (MSASWADVAD…WNNRSGGWDR (110 aa)). S2 bears the N-acetylserine mark. Residues 11 to 25 (SENTGSGSSNQNSHP) are compositionally biased toward polar residues. Composition is skewed to gly residues over residues 68–80 (GGSGVGVGGGGGY) and 87–101 (PGSGSGYGGRGGGGW). The short motif at 159 to 187 (NTFAEIDLGEALNLNIRRCKYVKPTPVQR) is the Q motif element. Positions 190–374 (IPILLEGRDL…ADFLANYIFL (185 aa)) constitute a Helicase ATP-binding domain. 203-210 (AQTGSGKT) is an ATP binding site. The short motif at 318–321 (DEAD) is the DEAD box element. Positions 401–552 (HLMDLLHAQR…EVPEWLTRYA (152 aa)) constitute a Helicase C-terminal domain. Residues 555–600 (SSFGGGKNRRSGGRFGGRDFRREGSFGSGRGGYGGGGGGYGGGGGY) are disordered. Over residues 580–600 (FGSGRGGYGGGGGGYGGGGGY) the composition is skewed to gly residues.

The protein belongs to the DEAD box helicase family. DDX3/DED1 subfamily.

The catalysed reaction is ATP + H2O = ADP + phosphate + H(+). The polypeptide is DEAD-box ATP-dependent RNA helicase 37 (RH37) (Arabidopsis thaliana (Mouse-ear cress)).